Consider the following 688-residue polypeptide: Collagen alpha-2(IX) chain (688 aa).

A signal peptide spans Met1–Ala22. The triple-helical region 4 (COL4) stretch occupies residues Gly26 to Ile162. Disordered stretches follow at residues Gly26–Ser520, Gly549–Arg578, and Ile590–Phe662. 2 stretches are compositionally biased toward pro residues: residues Glu30 to Val42 and Leu105 to Val126. Positions Leu128–Lys138 are enriched in low complexity. Pro residues predominate over residues Pro143–Pro156. Position 159 is a 4-hydroxyproline (Pro159). The segment at Gln163 to Ala179 is nonhelical region 4 (NC4). The O-linked (Xyl...) (glycosaminoglycan) serine glycan is linked to Ser168. Residues Gly180–Asp518 are triple-helical region 3 (COL3). Lys182 carries the 5-hydroxylysine modification. A glycan (O-linked (Gal...) hydroxylysine) is linked at Lys182. Low complexity-rich tracts occupy residues Lys251 to Glu265 and Pro394 to Pro412. Over residues Gly435–Gly444 the composition is skewed to gly residues. A compositionally biased stretch (low complexity) spans Arg497–Pro506. The interval Ala519 to Leu548 is nonhelical region 3 (NC3). A triple-helical region 2 (COL2) region spans residues Gly549 to Ala631. Over residues Pro556 to Tyr565 the composition is skewed to pro residues. The segment covering Lys598–Arg610 has biased composition (basic and acidic residues). A nonhelical region 2 (NC2) region spans residues Ile632–Asn633. Residues Gly634–Cys663 form a triple-helical region 1 (COL1) region. The segment covering Ala641–Pro651 has biased composition (low complexity). Residues Glu664–Pro688 are nonhelical region 1 (NC1).

Belongs to the fibril-associated collagens with interrupted helices (FACIT) family. As to quaternary structure, heterotrimer of an alpha 1(IX), an alpha 2(IX) and an alpha 3(IX) chain. The chains are linked to each other by interchain disulfide bonds. Trimers are also cross-linked via hydroxylysines. Post-translationally, prolines at the third position of the tripeptide repeating unit (G-X-Y) are hydroxylated in some or all of the chains. Covalently linked to the telopeptides of type II collagen by hydroxylysine-derived cross-links.

It is found in the secreted. The protein resides in the extracellular space. Its subcellular location is the extracellular matrix. In terms of biological role, structural component of hyaline cartilage and vitreous of the eye. This chain is Collagen alpha-2(IX) chain, found in Bos taurus (Bovine).